A 552-amino-acid chain; its full sequence is MERFLRKYNISGDYANATRTFLAISPQWTCSHLKRNCLFNGMCVKQNFERAMIAATDAEEPAKAYKLVELAKEAMYDRETVWLQCFKSFSQPYEEDVEGKMKRCGAQLLEDYRKSGMMDEAVKQSALANSERVRLDDSLSAMPYIYVPIKEGQIVEPTFISRYRQIAYYFHNPDAADDWIDPNLFGIRGQHNQIQREVERQINTCPYTGYRGRVFQVMFLPIQLINFLRMDDFAKHFNRYASMAIQQYLRVGYAEEIRYVQQLFGRVPTGEFPLHQMMLMRRDFPTRDRSIVEARVRRSGDENWQSWLLPMIIIREGLDHQDRWEWFIDYMDRKHTCQLCYLKHSKQIPTCSVIDVRASELTGCSPFKMVKIEEHVGNDSVFKTKLVRDEQIGRIGDHYYTTNCYTGAEALVTTAIHIHRWIRGSGIWNDEGWQEGIFMLGRVLLRWELTKVQRSALLRLFCFVCYGYAPRADGTIPDWNNLGNFLDIILKGPELSEDEDERAYATMFEMVRCIITLCYAEKVHFAGSAAPACESGEVINLAARMSQMWMEY.

Belongs to the orbivirus non-structural protein NS1 family.

This chain is Non-structural protein NS1 (Segment-5), found in Antilocapra americana (Pronghorn).